Reading from the N-terminus, the 102-residue chain is Large ribosomal subunit protein bL21 (102 aa).

It belongs to the bacterial ribosomal protein bL21 family. As to quaternary structure, part of the 50S ribosomal subunit. Contacts protein L20.

In terms of biological role, this protein binds to 23S rRNA in the presence of protein L20. The sequence is that of Large ribosomal subunit protein bL21 from Solidesulfovibrio magneticus (strain ATCC 700980 / DSM 13731 / RS-1) (Desulfovibrio magneticus).